We begin with the raw amino-acid sequence, 268 residues long: Undecaprenyl-diphosphatase (268 aa).

The next 7 helical transmembrane spans lie at 5-25 (SIIS…IPVS), 43-63 (GNTF…LVYF), 84-104 (LSVL…HGFI), 109-129 (FETP…LYVI), 184-204 (AAEF…ALDL), 213-233 (IDDI…GIFV), and 248-268 (PFAI…WLLG).

It belongs to the UppP family.

It is found in the cell inner membrane. It carries out the reaction di-trans,octa-cis-undecaprenyl diphosphate + H2O = di-trans,octa-cis-undecaprenyl phosphate + phosphate + H(+). In terms of biological role, catalyzes the dephosphorylation of undecaprenyl diphosphate (UPP). Confers resistance to bacitracin. This Sinorhizobium medicae (strain WSM419) (Ensifer medicae) protein is Undecaprenyl-diphosphatase.